The chain runs to 158 residues: Complexin-3 (158 aa).

The disordered stretch occupies residues 14–47 (KNLTGSLGGGEDKGDGDKSAAEAQGMSREEYEEY). The segment covering 23–33 (GEDKGDGDKSA) has biased composition (basic and acidic residues). Positions 39–74 (MSREEYEEYQKQLVEEKMERDAQFTQRKAERATLRS) form a coiled coil. Cys-155 is subject to Cysteine methyl ester. Cys-155 is lipidated: S-farnesyl cysteine. Residues 156 to 158 (HIM) constitute a propeptide, removed in mature form.

It belongs to the complexin/synaphin family. In terms of assembly, binds to the SNARE core complex containing SNAP25, VAMP2 and STX1A. In terms of processing, farnesylation mediates presynaptic targeting. Present in many brain regions, including hippocampus and cerebellum (at protein level). Expressed in the retina (at protein level). Expressed in retinal amacrine cells (at protein level). Expressed in retinal photoreceptor ribbon synapses. Expressed in the retinal inner nuclear layer, at bipolar cells (at protein level). Expressed in cone photoreceptor synaptic terminals (at protein level).

The protein localises to the synapse. Its subcellular location is the cell membrane. Functionally, complexin that regulates SNARE protein complex-mediated synaptic vesicle fusion. Required for the maintenance of synaptic ultrastructure in the adult retina. Positively regulates synaptic transmission through synaptic vesicle availability and exocytosis of neurotransmitters at photoreceptor ribbon synapses in the retina. Suppresses tonic photoreceptor activity and baseline 'noise' by suppression of Ca(2+) vesicle tonic release and the facilitation of evoked synchronous and asynchronous Ca(2+) vesicle release. The chain is Complexin-3 (Cplx3) from Mus musculus (Mouse).